The sequence spans 309 residues: Tagatose-6-phosphate kinase (309 aa).

This sequence belongs to the carbohydrate kinase PfkB family. LacC subfamily.

It carries out the reaction D-tagatofuranose 6-phosphate + ATP = D-tagatofuranose 1,6-bisphosphate + ADP + H(+). It functions in the pathway carbohydrate metabolism; D-tagatose 6-phosphate degradation; D-glyceraldehyde 3-phosphate and glycerone phosphate from D-tagatose 6-phosphate: step 1/2. The chain is Tagatose-6-phosphate kinase from Streptococcus pyogenes serotype M28 (strain MGAS6180).